We begin with the raw amino-acid sequence, 729 residues long: Glycine--tRNA ligase (729 aa).

Residues 1 to 33 (MPCLLPSLLRATRAALPLLSPPRVVAASASQRL) constitute a mitochondrion transit peptide. In terms of domain architecture, WHEP-TRS spans 53 to 109 (LLAPLRLAVRQQGDFVRKLKEDKAPQVDVDRAVAELKARKRVLEAKELALQPKDDIV). Lys194 carries the N6-acetyllysine modification. Residue Glu289 coordinates glycine. ATP is bound by residues 321-323 (RNE) and 332-333 (RV). Position 340 (Glu340) interacts with glycine. Tyr443 carries the phosphotyrosine modification. 447–448 (EI) provides a ligand contact to ATP. The residue at position 491 (Lys491) is an N6-acetyllysine. 566-568 (EPS) provides a ligand contact to glycine. Arg573 lines the ATP pocket. Ser690 is modified (phosphoserine). Thr726 is modified (phosphothreonine).

This sequence belongs to the class-II aminoacyl-tRNA synthetase family. Homodimer.

The protein resides in the cytoplasm. The protein localises to the mitochondrion. It is found in the cell projection. It localises to the axon. Its subcellular location is the secreted. The protein resides in the extracellular exosome. The enzyme catalyses tRNA(Gly) + glycine + ATP = glycyl-tRNA(Gly) + AMP + diphosphate. It carries out the reaction 2 ATP + H(+) = P(1),P(4)-bis(5'-adenosyl) tetraphosphate + diphosphate. In terms of biological role, catalyzes the ATP-dependent ligation of glycine to the 3'-end of its cognate tRNA, via the formation of an aminoacyl-adenylate intermediate (Gly-AMP). Also produces diadenosine tetraphosphate (Ap4A), a universal pleiotropic signaling molecule needed for cell regulation pathways, by direct condensation of 2 ATPs. Thereby, may play a special role in Ap4A homeostasis. This chain is Glycine--tRNA ligase (Gars1), found in Mus musculus (Mouse).